Reading from the N-terminus, the 212-residue chain is Orotate phosphoribosyltransferase (212 aa).

Lysine 26 contributes to the 5-phospho-alpha-D-ribose 1-diphosphate binding site. 34-35 (FF) lines the orotate pocket. 5-phospho-alpha-D-ribose 1-diphosphate contacts are provided by residues 72–73 (YK), arginine 98, lysine 99, lysine 102, histidine 104, and 123–131 (DDVISAGTS). 2 residues coordinate orotate: serine 127 and arginine 155.

The protein belongs to the purine/pyrimidine phosphoribosyltransferase family. PyrE subfamily. In terms of assembly, homodimer. It depends on Mg(2+) as a cofactor.

It catalyses the reaction orotidine 5'-phosphate + diphosphate = orotate + 5-phospho-alpha-D-ribose 1-diphosphate. It participates in pyrimidine metabolism; UMP biosynthesis via de novo pathway; UMP from orotate: step 1/2. Functionally, catalyzes the transfer of a ribosyl phosphate group from 5-phosphoribose 1-diphosphate to orotate, leading to the formation of orotidine monophosphate (OMP). This chain is Orotate phosphoribosyltransferase, found in Thiobacillus denitrificans (strain ATCC 25259 / T1).